The primary structure comprises 207 residues: Alpha-1-acid glycoprotein 1 (207 aa).

The first 18 residues, 1 to 18 (MALHMILVMLSLLPLLEA), serve as a signal peptide directing secretion. Gln19 carries the post-translational modification Pyrrolidone carboxylic acid. Residues Asn25, Asn34, Asn76, Asn94, and Asn104 are each glycosylated (N-linked (GlcNAc...) asparagine). Cys91 and Cys184 are oxidised to a cystine.

This sequence belongs to the calycin superfamily. Lipocalin family. Expressed by the liver and secreted in plasma.

The protein localises to the secreted. Its function is as follows. Functions as a transport protein in the blood stream. Binds various ligands in the interior of its beta-barrel domain. Appears to function in modulating the activity of the immune system during the acute-phase reaction. The sequence is that of Alpha-1-acid glycoprotein 1 (Orm1) from Mus caroli (Ryukyu mouse).